We begin with the raw amino-acid sequence, 1048 residues long: FERM, ARHGEF and pleckstrin domain-containing protein 1 (1048 aa).

Positions 1–37 are disordered; the sequence is MGEIEQKPTPASRLGAPENSGISTLERGQKPPPTPSG. Phosphoserine is present on residues Ser-20 and Ser-23. Phosphothreonine is present on Thr-24. One can recognise an FERM domain in the interval 40 to 320; sequence MTVKIQMLDD…EHHAFFRLFE (281 aa). A phosphoserine mark is found at Ser-340, Ser-373, Ser-389, Ser-403, Ser-427, Ser-433, and Ser-437. A disordered region spans residues 361–536; that stretch reads FERKHSKIHS…TDDEEEGRRK (176 aa). The span at 371–395 shows a compositional bias: polar residues; sequence TRSLVSQPTAPNSEVPKQSPQSASL. 2 stretches are compositionally biased toward polar residues: residues 472–491 and 498–513; these read STGSLTGSPHLSELSINSQG and VTLSPNLSPDNKQASP. Residues Ser-512 and Ser-516 each carry the phosphoserine modification. Residues 542-733 enclose the DH domain; sequence KAYYIAKEVS…TEMVAQLHGT (192 aa). Positions 762-859 constitute a PH 1 domain; sequence EFIRLGSLSK…WMEDIQMAID (98 aa). Residues Ser-836, Ser-875, and Ser-881 each carry the phosphoserine modification. The disordered stretch occupies residues 865 to 907; sequence NGPTPELLASSPPDNKSPDEATAADQESEDDLSASRTSLERQA. At Thr-886 the chain carries Phosphothreonine. Ser-892, Ser-899, and Ser-902 each carry phosphoserine. One can recognise a PH 2 domain in the interval 935 to 1032; the sequence is ENQLSGNLLR…WMEVIRSATS (98 aa).

Interacts with CADM1. Interacts with RAC1. In terms of tissue distribution, detected in brain cortex, hippocampus, striatum, olfactory bulb, cerebellum and hindbrain (at protein level).

The protein localises to the cell membrane. Its subcellular location is the synapse. The protein resides in the synaptosome. It is found in the cytoplasm. It localises to the cytosol. The protein localises to the cell projection. Its subcellular location is the filopodium. The protein resides in the dendrite. It is found in the dendritic spine. Its function is as follows. Functions as a guanine nucleotide exchange factor for RAC1. May play a role in semaphorin signaling. Plays a role in the assembly and disassembly of dendritic filopodia, the formation of dendritic spines, regulation of dendrite length and ultimately the formation of synapses. The chain is FERM, ARHGEF and pleckstrin domain-containing protein 1 (Farp1) from Mus musculus (Mouse).